A 550-amino-acid polypeptide reads, in one-letter code: MGLKVNVSAIFMAVLLTLQTPTGQIHWGNLSKIGVVGIGSASYKVMTRSSHQSLVIKLMPNITLLNNCTRVEIAEYRRLLRTVLEPIRDALNAMTQNIRPVQSVASSRRHKRFAGVVLAGAALGVATAAQITAGIALHQSMLNSQAIDNLRASLETTNQAIEAIRQAGQEMILAVQGVQDYINNELIPSMNQLSCDLIGQKLGLKLLRYYTEILSLFGPSLRDPISAEISIQALSYALGGDINKVLEKLGYSGGDLLGILESRGIKARITHVDTESYFIVLSIAYPTLSEIKGVIVHRLEGVSYNIGSQEWYTTVPKYVATQGYLISNFDESSCTFMPEGTVCSQNALYPMSPLLQECLRGSTKSCARTLVSGSFGNRFILSQGNLIANCASILCKCYTTGTIINQDPDKILTYIAADHCPVVEVNGVTIQVGSRRYPDAVYLHRIDLGPPISLERLDVGTNLGNAIAKLEDAKELLESSDQILRSMKGLSSTSIVYILIAVCLGGLIGIPALICCCRGRCNKKGEQVGMSRPGLKPDLTGTSKSYVRSL.

A signal peptide spans 1–23 (MGLKVNVSAIFMAVLLTLQTPTG). At 24-487 (QIHWGNLSKI…ESSDQILRSM (464 aa)) the chain is on the extracellular side. Residues Asn29 and Asn61 are each glycosylated (N-linked (GlcNAc...) asparagine; by host). Positions 69 to 95 (TRVEIAEYRRLLRTVLEPIRDALNAMT) are HRC. Positions 113–138 (FAGVVLAGAALGVATAAQITAGIALH) are fusion peptide. The stretch at 138-166 (HQSMLNSQAIDNLRASLETTNQAIEAIRQ) forms a coiled coil. Residues 139-215 (QSMLNSQAID…LLRYYTEILS (77 aa)) form an HRA region. Cystine bridges form between Cys334–Cys343, Cys358–Cys366, Cys390–Cys395, and Cys397–Cys420. Positions 367-444 (ARTLVSGSFG…RRYPDAVYLH (78 aa)) are interaction with hemagglutinin. Residues 445-494 (RIDLGPPISLERLDVGTNLGNAIAKLEDAKELLESSDQILRSMKGLSSTS) are HRB. Residues 462 to 487 (NLGNAIAKLEDAKELLESSDQILRSM) adopt a coiled-coil conformation. Residues 488–518 (KGLSSTSIVYILIAVCLGGLIGIPALICCCR) form a helical membrane-spanning segment. The Cytoplasmic portion of the chain corresponds to 519–550 (GRCNKKGEQVGMSRPGLKPDLTGTSKSYVRSL).

It belongs to the paramyxoviruses fusion glycoprotein family. As to quaternary structure, homotrimer of disulfide-linked F1-F2. Post-translationally, the inactive precursor F0 is glycosylated and proteolytically cleaved into F1 and F2 to be functionally active. The cleavage is mediated by host furin during the transport and maturation of the polypeptide.

It localises to the virion membrane. The protein resides in the host cell membrane. Its function is as follows. Class I viral fusion protein. Under the current model, the protein has at least 3 conformational states: pre-fusion native state, pre-hairpin intermediate state, and post-fusion hairpin state. During viral and plasma cell membrane fusion, the heptad repeat (HR) regions assume a trimer-of-hairpins structure, positioning the fusion peptide in close proximity to the C-terminal region of the ectodomain. The formation of this structure appears to drive apposition and subsequent fusion of viral and plasma cell membranes. Directs fusion of viral and cellular membranes leading to delivery of the nucleocapsid into the cytoplasm. This fusion is pH independent and occurs directly at the outer cell membrane. During viral entry or virus-mediated fusion between infected cells and neighboring susceptible cells, the head domain of the H protein initially binds to its receptor and then the stalk region of the H protein transmits the fusion-triggering signal to the F protein. Upon HN binding to its cellular receptor, the hydrophobic fusion peptide is unmasked and interacts with the cellular membrane, inducing the fusion between cell and virion membranes. Later in infection, F proteins expressed at the plasma membrane of infected cells could mediate fusion with adjacent cells to form syncytia, a cytopathic effect that could lead to tissue necrosis. Functionally, some hyperfusogenic isolates can induce membrane fusion in SLAM- and nectin-4-negative cells and are linked to fatal subacute sclerosing panencephalitis (SSPE) or measles inclusion body encephalitis (MIBE). The neuropathogenicity is closely associated with enhanced propagation mediated by cell-to-cell fusion in the brain, which is principally regulated by hyperfusogenic mutations of the viral F protein. Cell-to-cell transmission of the virus also occurs with hyperfusogenic isolates. The sequence is that of Fusion glycoprotein F0 (F) from Homo sapiens (Human).